We begin with the raw amino-acid sequence, 181 residues long: Inner membrane-spanning protein YciB (181 aa).

5 consecutive transmembrane segments (helical) span residues 24–44 (SATA…WLRH), 49–69 (NMLW…LILQ), 81–101 (LYWL…KNLI), 119–139 (LNIS…YVAY), and 149–169 (FKLF…ALLL).

Belongs to the YciB family.

It is found in the cell inner membrane. Plays a role in cell envelope biogenesis, maintenance of cell envelope integrity and membrane homeostasis. The sequence is that of Inner membrane-spanning protein YciB from Nitrosomonas eutropha (strain DSM 101675 / C91 / Nm57).